A 178-amino-acid chain; its full sequence is Small ribosomal subunit protein uS5 (178 aa).

Residues 13-76 (LEERVVQINR…EAAKRNLIRV (64 aa)) form the S5 DRBM domain. A disordered region spans residues 156 to 178 (ASRRDMTPQELMERRTRRETEAA).

This sequence belongs to the universal ribosomal protein uS5 family. In terms of assembly, part of the 30S ribosomal subunit. Contacts proteins S4 and S8.

With S4 and S12 plays an important role in translational accuracy. In terms of biological role, located at the back of the 30S subunit body where it stabilizes the conformation of the head with respect to the body. The polypeptide is Small ribosomal subunit protein uS5 (Chloroflexus aurantiacus (strain ATCC 29364 / DSM 637 / Y-400-fl)).